We begin with the raw amino-acid sequence, 779 residues long: Ribosome-releasing factor 2, mitochondrial (779 aa).

The region spanning 68–353 (AKIRNIGIMA…AVTTYLPSPE (286 aa)) is the tr-type G domain. GTP is bound by residues 77–84 (AHIDAGKT), 141–145 (DTPGH), and 195–198 (NKMD).

Belongs to the TRAFAC class translation factor GTPase superfamily. Classic translation factor GTPase family. EF-G/EF-2 subfamily.

It is found in the mitochondrion. It catalyses the reaction GTP + H2O = GDP + phosphate + H(+). Its function is as follows. Mitochondrial GTPase that mediates the disassembly of ribosomes from messenger RNA at the termination of mitochondrial protein biosynthesis. Acts in collaboration with MRRF. GTP hydrolysis follows the ribosome disassembly and probably occurs on the ribosome large subunit. Not involved in the GTP-dependent ribosomal translocation step during translation elongation. This Mus musculus (Mouse) protein is Ribosome-releasing factor 2, mitochondrial (Gfm2).